Consider the following 140-residue polypeptide: Nucleoside diphosphate kinase (140 aa).

The ATP site is built by Lys-11, Phe-59, Arg-87, Thr-93, Arg-104, and Asn-114. His-117 functions as the Pros-phosphohistidine intermediate in the catalytic mechanism.

This sequence belongs to the NDK family. As to quaternary structure, homotetramer. The cofactor is Mg(2+).

Its subcellular location is the cytoplasm. It catalyses the reaction a 2'-deoxyribonucleoside 5'-diphosphate + ATP = a 2'-deoxyribonucleoside 5'-triphosphate + ADP. The enzyme catalyses a ribonucleoside 5'-diphosphate + ATP = a ribonucleoside 5'-triphosphate + ADP. In terms of biological role, major role in the synthesis of nucleoside triphosphates other than ATP. The ATP gamma phosphate is transferred to the NDP beta phosphate via a ping-pong mechanism, using a phosphorylated active-site intermediate. This Sinorhizobium fredii (strain NBRC 101917 / NGR234) protein is Nucleoside diphosphate kinase.